A 529-amino-acid chain; its full sequence is UDP-glucuronosyltransferase 2B28 (529 aa).

Positions 1-24 (MALKWTSVLLLIHLGCYFSSGSCG) are cleaved as a signal peptide. Position 135 is an N6-succinyllysine (K135). N-linked (GlcNAc...) asparagine glycosylation occurs at N315. Residues 495–517 (GFLLACVATVIFVVTKFCLFCFW) traverse the membrane as a helical segment.

It belongs to the UDP-glycosyltransferase family. In terms of tissue distribution, expressed in the liver, breast and kidney.

It localises to the endoplasmic reticulum membrane. The protein localises to the cytoplasm. Its subcellular location is the perinuclear region. It carries out the reaction glucuronate acceptor + UDP-alpha-D-glucuronate = acceptor beta-D-glucuronoside + UDP + H(+). Functionally, UDP-glucuronosyltransferase (UGT) that catalyzes phase II biotransformation reactions in which lipophilic substrates are conjugated with glucuronic acid to increase the metabolite's water solubility, thereby facilitating excretion into either the urine or bile. Essential for the elimination and detoxification of drugs, xenobiotics and endogenous compounds. Catalyzes the glucuronidation of endogenous steroid hormones such as androgens (androsterone, 3alpha-androstanediol) and estrogens (estradiol, estrone). Catalyzes the glucuronidation of bile acid substrates, which are natural detergents for dietary lipids absorption. Displays glucuronidation activity toward the phenolic compounds eugenol. Lack UDP-glucuronosyltransferase (UGT) activity. This chain is UDP-glucuronosyltransferase 2B28, found in Homo sapiens (Human).